The primary structure comprises 365 residues: 3-dehydroquinate synthase (365 aa).

NAD(+)-binding positions include 106-110 (GVIGD), 130-131 (TT), lysine 142, lysine 151, and 169-172 (FFAT). Zn(2+) is bound by residues glutamate 184, histidine 247, and histidine 264.

This sequence belongs to the sugar phosphate cyclases superfamily. Dehydroquinate synthase family. It depends on NAD(+) as a cofactor. Co(2+) serves as cofactor. Zn(2+) is required as a cofactor.

The protein resides in the cytoplasm. It catalyses the reaction 7-phospho-2-dehydro-3-deoxy-D-arabino-heptonate = 3-dehydroquinate + phosphate. Its pathway is metabolic intermediate biosynthesis; chorismate biosynthesis; chorismate from D-erythrose 4-phosphate and phosphoenolpyruvate: step 2/7. In terms of biological role, catalyzes the conversion of 3-deoxy-D-arabino-heptulosonate 7-phosphate (DAHP) to dehydroquinate (DHQ). The chain is 3-dehydroquinate synthase from Listeria innocua serovar 6a (strain ATCC BAA-680 / CLIP 11262).